The sequence spans 227 residues: Ribonuclease 3 (227 aa).

The RNase III domain occupies 4 to 133; that stretch reads FEKLEKLLSY…LIAAIYLDSN (130 aa). Glutamate 46 provides a ligand contact to Mg(2+). Residue aspartate 50 is part of the active site. Asparagine 119 and glutamate 122 together coordinate Mg(2+). Glutamate 122 is an active-site residue. Positions 158–226 constitute a DRBM domain; that stretch reads DPKTALQEWA…ARSLLHRLKN (69 aa).

It belongs to the ribonuclease III family. As to quaternary structure, homodimer. Mg(2+) is required as a cofactor.

It localises to the cytoplasm. It carries out the reaction Endonucleolytic cleavage to 5'-phosphomonoester.. In terms of biological role, digests double-stranded RNA. Involved in the processing of primary rRNA transcript to yield the immediate precursors to the large and small rRNAs (23S and 16S). Processes some mRNAs, and tRNAs when they are encoded in the rRNA operon. Processes pre-crRNA and tracrRNA of type II CRISPR loci if present in the organism. The sequence is that of Ribonuclease 3 from Rickettsia africae (strain ESF-5).